The primary structure comprises 162 residues: Putative pre-16S rRNA nuclease (162 aa).

This sequence belongs to the YqgF nuclease family.

The protein resides in the cytoplasm. In terms of biological role, could be a nuclease involved in processing of the 5'-end of pre-16S rRNA. The chain is Putative pre-16S rRNA nuclease from Brucella abortus (strain S19).